The sequence spans 145 residues: Mannitol-specific phosphotransferase enzyme IIA component (145 aa).

Positions 4 to 143 (TILSTETIKV…QEVLAFLGEV (140 aa)) constitute a PTS EIIA type-2 domain. His64 (tele-phosphohistidine intermediate) is an active-site residue. A Phosphohistidine; by HPr modification is found at His64.

It localises to the cytoplasm. Its function is as follows. The phosphoenolpyruvate-dependent sugar phosphotransferase system (sugar PTS), a major carbohydrate active transport system, catalyzes the phosphorylation of incoming sugar substrates concomitantly with their translocation across the cell membrane. The enzyme II CmtAB PTS system is involved in D-mannitol transport. The sequence is that of Mannitol-specific phosphotransferase enzyme IIA component (mtlF) from Halalkalibacterium halodurans (strain ATCC BAA-125 / DSM 18197 / FERM 7344 / JCM 9153 / C-125) (Bacillus halodurans).